Consider the following 294-residue polypeptide: Elongation factor Ts (294 aa).

The tract at residues 80 to 83 is involved in Mg(2+) ion dislocation from EF-Tu; the sequence is TDFV.

This sequence belongs to the EF-Ts family.

It localises to the cytoplasm. Its function is as follows. Associates with the EF-Tu.GDP complex and induces the exchange of GDP to GTP. It remains bound to the aminoacyl-tRNA.EF-Tu.GTP complex up to the GTP hydrolysis stage on the ribosome. This chain is Elongation factor Ts, found in Polynucleobacter necessarius subsp. necessarius (strain STIR1).